Reading from the N-terminus, the 334-residue chain is N-acetyl-gamma-glutamyl-phosphate reductase (334 aa).

Cysteine 154 is an active-site residue.

This sequence belongs to the NAGSA dehydrogenase family. Type 1 subfamily.

Its subcellular location is the cytoplasm. The enzyme catalyses N-acetyl-L-glutamate 5-semialdehyde + phosphate + NADP(+) = N-acetyl-L-glutamyl 5-phosphate + NADPH + H(+). It participates in amino-acid biosynthesis; L-arginine biosynthesis; N(2)-acetyl-L-ornithine from L-glutamate: step 3/4. Functionally, catalyzes the NADPH-dependent reduction of N-acetyl-5-glutamyl phosphate to yield N-acetyl-L-glutamate 5-semialdehyde. This is N-acetyl-gamma-glutamyl-phosphate reductase from Yersinia pseudotuberculosis serotype I (strain IP32953).